The following is a 166-amino-acid chain: Transcription antitermination protein NusB (166 aa).

A compositionally biased stretch (basic and acidic residues) spans 1–15 (MISDDSDRFNPRDPK). The segment at 1 to 30 (MISDDSDRFNPRDPKPANAGKPSKSAKRRE) is disordered.

Belongs to the NusB family.

In terms of biological role, involved in transcription antitermination. Required for transcription of ribosomal RNA (rRNA) genes. Binds specifically to the boxA antiterminator sequence of the ribosomal RNA (rrn) operons. This Pseudomonas fluorescens (strain ATCC BAA-477 / NRRL B-23932 / Pf-5) protein is Transcription antitermination protein NusB.